The following is a 484-amino-acid chain: Mitochondrial metal transporter 2 (484 aa).

The transit peptide at 1 to 56 (MLRISIDSIKQFGSFVPGYNNTSYHAAGRAIRTSSLYSTMISANPRRCLHSSKLLN) directs the protein to the mitochondrion. Residues 73–82 (SSQNGSNSRQ) show a composition bias toward polar residues. Positions 73–114 (SSQNGSNSRQNESEGKKEGKASSVKSLLQHTHSHSHTHMHDN) are disordered. The span at 83–92 (NESEGKKEGK) shows a compositional bias: basic and acidic residues. Helical transmembrane passes span 132–152 (ITWIGLASNVGMAVGKFVGGI), 158–178 (ALLADSVHALSDLVSDFLTLF), 209–229 (ILAMAGISIGWSSLCAIVGPV), 256–276 (ATNVNAVWIAAGSILVKEWVF), and 316–336 (YFFNIQSLDNLGGLVVSGLII). Residues 453–484 (DSKGDLEHSHDTKSTNHTHTHSDSADTHTHKH) are disordered.

This sequence belongs to the cation diffusion facilitator (CDF) transporter (TC 2.A.4) family. SLC30A subfamily.

The protein resides in the mitochondrion membrane. Mitochondrial metal transporter involved in mitochondrial iron accumulation. The sequence is that of Mitochondrial metal transporter 2 (MMT2) from Saccharomyces cerevisiae (strain ATCC 204508 / S288c) (Baker's yeast).